A 182-amino-acid chain; its full sequence is Isopentenyl-diphosphate Delta-isomerase (182 aa).

2 residues coordinate Mn(2+): histidine 25 and histidine 32. One can recognise a Nudix hydrolase domain in the interval 30–164 (LLHLAFSSWL…PWAFSPWMVM (135 aa)). Cysteine 67 is an active-site residue. Histidine 69 contacts Mn(2+). Glutamate 87 contacts Mg(2+). Mn(2+) contacts are provided by glutamate 114 and glutamate 116. The active site involves glutamate 116.

This sequence belongs to the IPP isomerase type 1 family. In terms of assembly, homodimer. Mg(2+) is required as a cofactor. Requires Mn(2+) as cofactor.

Its subcellular location is the cytoplasm. The catalysed reaction is isopentenyl diphosphate = dimethylallyl diphosphate. It participates in isoprenoid biosynthesis; dimethylallyl diphosphate biosynthesis; dimethylallyl diphosphate from isopentenyl diphosphate: step 1/1. In terms of biological role, catalyzes the 1,3-allylic rearrangement of the homoallylic substrate isopentenyl (IPP) to its highly electrophilic allylic isomer, dimethylallyl diphosphate (DMAPP). The polypeptide is Isopentenyl-diphosphate Delta-isomerase (Shigella boydii serotype 18 (strain CDC 3083-94 / BS512)).